A 525-amino-acid polypeptide reads, in one-letter code: GMP synthase [glutamine-hydrolyzing] (525 aa).

The Glutamine amidotransferase type-1 domain occupies 9 to 207 (RILILDFGSQ…VLDICQCEAL (199 aa)). Catalysis depends on Cys86, which acts as the Nucleophile. Catalysis depends on residues His181 and Glu183. The GMPS ATP-PPase domain maps to 208–400 (WTPAKIIDDA…LGLPYNMLYR (193 aa)). 235-241 (SGGVDSS) is a binding site for ATP.

Homodimer.

The catalysed reaction is XMP + L-glutamine + ATP + H2O = GMP + L-glutamate + AMP + diphosphate + 2 H(+). It functions in the pathway purine metabolism; GMP biosynthesis; GMP from XMP (L-Gln route): step 1/1. Catalyzes the synthesis of GMP from XMP. This is GMP synthase [glutamine-hydrolyzing] from Pectobacterium atrosepticum (strain SCRI 1043 / ATCC BAA-672) (Erwinia carotovora subsp. atroseptica).